Reading from the N-terminus, the 332-residue chain is Phenol 2-monooxygenase, oxygenase component MhpL (332 aa).

It belongs to the TmoE/XamoE family.

It carries out the reaction phenol + NADH + O2 + H(+) = catechol + NAD(+) + H2O. It functions in the pathway aromatic compound metabolism; phenol degradation. Functionally, part of a multicomponent enzyme which catalyzes the degradation of phenol and some of its methylated derivatives. The polypeptide is Phenol 2-monooxygenase, oxygenase component MhpL (mphL) (Acinetobacter pittii (strain PHEA-2)).